The primary structure comprises 258 residues: MQENLKNDKLKIGKYEFDSRFILGSGKYSLELIKSSIEEAKAQIITLALRRANTGEIANILDYIPKNITLLPNTSGARNADEALRIARLSRELGCGELIKIEVISDSRYLLPDNYETIKACELLAKEGFTPLPYMHADLYAARAMRDVGAAAIMPLAAPIGSNKGLCAKEFIQILLNEIDLPIIVDAGIGTPAQACEAMQMGVSAVMVNTAIAEAKDIALMARAFSLAVNAGRAAFLAGLASVSEAKASSPLTGFLRD.

Catalysis depends on Lys-100, which acts as the Schiff-base intermediate with DXP. Residues Gly-161, 187–188 (AG), and 209–210 (NT) each bind 1-deoxy-D-xylulose 5-phosphate.

The protein belongs to the ThiG family. In terms of assembly, homotetramer. Forms heterodimers with either ThiH or ThiS.

It is found in the cytoplasm. The catalysed reaction is [ThiS sulfur-carrier protein]-C-terminal-Gly-aminoethanethioate + 2-iminoacetate + 1-deoxy-D-xylulose 5-phosphate = [ThiS sulfur-carrier protein]-C-terminal Gly-Gly + 2-[(2R,5Z)-2-carboxy-4-methylthiazol-5(2H)-ylidene]ethyl phosphate + 2 H2O + H(+). It functions in the pathway cofactor biosynthesis; thiamine diphosphate biosynthesis. Its function is as follows. Catalyzes the rearrangement of 1-deoxy-D-xylulose 5-phosphate (DXP) to produce the thiazole phosphate moiety of thiamine. Sulfur is provided by the thiocarboxylate moiety of the carrier protein ThiS. In vitro, sulfur can be provided by H(2)S. This Campylobacter jejuni subsp. doylei (strain ATCC BAA-1458 / RM4099 / 269.97) protein is Thiazole synthase.